Here is a 250-residue protein sequence, read N- to C-terminus: Probable replication-associated protein repA2 (250 aa).

The protein belongs to the IncFII RepA family.

Functionally, this protein is essential for plasmid replication; it is involved in copy control functions. The protein is Probable replication-associated protein repA2 (repA2) of Buchnera aphidicola subsp. Schizaphis graminum (strain Sg).